A 1663-amino-acid chain; its full sequence is Kotanin synthase (1663 aa).

The N-terminal acylcarrier protein transacylase domain (SAT) stretch occupies residues 19 to 168; the sequence is RPHEFSFNTQ…PLPVYGGPCH (150 aa). The Ketosynthase family 3 (KS3) domain occupies 301 to 731; that stretch reads DSRIAVVGMS…GGNTSLLLEE (431 aa). Catalysis depends on for beta-ketoacyl synthase activity residues Cys474, His609, and His650. Residues 830–1149 are malonyl-CoA:ACP transacylase (MAT) domain; sequence FIFSGQGSFY…SMCTLQETGV (320 aa). Residues 1209–1527 are product template (PT) domain; the sequence is TALVHQIMEE…PRILMNRFFD (319 aa). The interval 1213–1349 is N-terminal hotdog fold; it reads HQIMEESFRP…GVVRCGDRQS (137 aa). Positions 1213–1523 constitute a PKS/mFAS DH domain; it reads HQIMEESFRP…LRPLPRILMN (311 aa). Catalysis depends on His1245, which acts as the Proton acceptor; for dehydratase activity. Positions 1376 to 1523 are C-terminal hotdog fold; the sequence is QASRVSRDLV…LRPLPRILMN (148 aa). Asp1434 serves as the catalytic Proton donor; for dehydratase activity. A disordered region spans residues 1544 to 1580; sequence DLPQVQHQPSPTTDSGPDDDPKDPNTGPLTPEVDLPV. The 78-residue stretch at 1586-1663 folds into the Carrier domain; it reads KANTKLVRGA…ELKEYLTASW (78 aa). An O-(pantetheine 4'-phosphoryl)serine modification is found at Ser1623.

The cofactor is pantetheine 4'-phosphate.

It functions in the pathway secondary metabolite biosynthesis. Its function is as follows. Non-reducing polyketide synthase; part of the gene cluster that mediates the biosynthesis of the bicoumarin kotanin. The non-reducing polyketide synthase ktnS first catalyzes the formation of the pentaketidic 4,7-dihydroxy-5-methylcoumarin from acetyl coenzyme A and 4 malonyl coenzyme A molecules. Further O-methylation by ktnB leads to the formation of 7-demethylsiderin. Then, an oxidative phenol coupling catalyzed by the cytochrome P450 monooxygenase ktnC forms the 8,8'-dimer P-orlandin via dimerization the monomeric precursor, 7-demethylsiderin. P-orlandin is subsequently O-methylated in a stepwise fashion to demethylkotanin and kotanin. The sequence is that of Kotanin synthase from Aspergillus niger (strain ATCC MYA-4892 / CBS 513.88 / FGSC A1513).